The following is a 276-amino-acid chain: uncharacterized protein (276 aa).

Residue Y47 is the Proton donor of the active site. Substrate is bound at residue H110.

This sequence belongs to the aldo/keto reductase family.

The protein resides in the cytoplasm. The protein localises to the nucleus. This is an uncharacterized protein from Schizosaccharomyces pombe (strain 972 / ATCC 24843) (Fission yeast).